The chain runs to 260 residues: Indole-3-glycerol phosphate synthase (260 aa).

It belongs to the TrpC family.

It carries out the reaction 1-(2-carboxyphenylamino)-1-deoxy-D-ribulose 5-phosphate + H(+) = (1S,2R)-1-C-(indol-3-yl)glycerol 3-phosphate + CO2 + H2O. The protein operates within amino-acid biosynthesis; L-tryptophan biosynthesis; L-tryptophan from chorismate: step 4/5. The sequence is that of Indole-3-glycerol phosphate synthase from Neisseria gonorrhoeae (strain ATCC 700825 / FA 1090).